The following is a 231-amino-acid chain: Killer cell lectin-like receptor subfamily F member 1 (231 aa).

Residues 1–38 (MQDEERYMTLNVQSKKRSSAQTSQLTFKDYSVTLHWYK) are Cytoplasmic-facing. Residue Tyr-7 is modified to Phosphotyrosine. Residues 39–59 (ILLGISGTVNGILTLTLISLI) form a helical; Signal-anchor for type II membrane protein membrane-spanning segment. The Extracellular portion of the chain corresponds to 60 to 231 (LLVSQGVLLK…SSVFKWICQY (172 aa)). Residues Asn-77, Asn-91, Asn-96, and Asn-176 are each glycosylated (N-linked (GlcNAc...) asparagine). The C-type lectin domain maps to 121–230 (YQGKCYWFSN…CSSVFKWICQ (110 aa)). Cystine bridges form between Cys-142/Cys-229 and Cys-208/Cys-221.

In terms of assembly, homodimer. Interacts with CLEC2B. In terms of processing, phosphorylated on Tyr-7; this phosphorylation is required for NKp80/KLRF1-mediated cytotoxicity. Strongly expressed in peripheral blood leukocytes and spleen, with weaker expression in lymph node and adult liver, and no expression detected in bone marrow, thymus, and fetal liver. Not expressed in brain, heart, placenta, lung, kidney, skeletal muscle, and pancreas. Within peripheral blood leukocyte and immunocyte cell lines, expression was predominant in NK cells but was also detected in monocytes.

It localises to the membrane. Functionally, functions as an activating receptor involved in immunosurveillance upon binding to various ligands displayed at the surface of myeloid cells. Upon interaction with CLEC2B ligand, stimulates NK-cell cytotoxicity and cytokine production leading to the cytolysis of malignant CLEC2B-expressing myeloid cells. Actviation of the common cytotoxicity pathway involves SRC and SYK kinases. This is Killer cell lectin-like receptor subfamily F member 1 (KLRF1) from Homo sapiens (Human).